A 116-amino-acid polypeptide reads, in one-letter code: Large ribosomal subunit protein bL19 (116 aa).

It belongs to the bacterial ribosomal protein bL19 family.

This protein is located at the 30S-50S ribosomal subunit interface and may play a role in the structure and function of the aminoacyl-tRNA binding site. The sequence is that of Large ribosomal subunit protein bL19 (rplS) from Geobacillus stearothermophilus (Bacillus stearothermophilus).